The chain runs to 602 residues: Aspartate--tRNA(Asp/Asn) ligase (602 aa).

Glutamate 170 contacts L-aspartate. The interval 194–197 is aspartate; sequence QLFK. Residue arginine 216 coordinates L-aspartate. Residues 216–218 and glutamine 225 each bind ATP; that span reads RDE. Histidine 448 serves as a coordination point for L-aspartate. Glutamate 482 provides a ligand contact to ATP. L-aspartate is bound at residue arginine 489. 534-537 provides a ligand contact to ATP; sequence GWDR. Residues 559 to 602 form a disordered region; it reads GGVDPLTSAPAPITAQQRKESGVDAKPEPKGDAAAAKPQVSAEK. A compositionally biased stretch (basic and acidic residues) spans 575 to 589; that stretch reads QRKESGVDAKPEPKG.

Belongs to the class-II aminoacyl-tRNA synthetase family. Type 1 subfamily. In terms of assembly, homodimer.

Its subcellular location is the cytoplasm. The catalysed reaction is tRNA(Asx) + L-aspartate + ATP = L-aspartyl-tRNA(Asx) + AMP + diphosphate. Its function is as follows. Aspartyl-tRNA synthetase with relaxed tRNA specificity since it is able to aspartylate not only its cognate tRNA(Asp) but also tRNA(Asn). Reaction proceeds in two steps: L-aspartate is first activated by ATP to form Asp-AMP and then transferred to the acceptor end of tRNA(Asp/Asn). The sequence is that of Aspartate--tRNA(Asp/Asn) ligase from Rhodococcus opacus (strain B4).